We begin with the raw amino-acid sequence, 338 residues long: Glycerol-3-phosphate dehydrogenase [NAD(P)+] (338 aa).

Ser-14, Tyr-15, His-35, and Lys-109 together coordinate NADPH. Residues Lys-109, Gly-138, and Thr-140 each coordinate sn-glycerol 3-phosphate. An NADPH-binding site is contributed by Ala-142. Sn-glycerol 3-phosphate-binding residues include Lys-194, Asp-247, Ser-257, Arg-258, and Asn-259. Lys-194 functions as the Proton acceptor in the catalytic mechanism. Residue Arg-258 coordinates NADPH. NADPH is bound by residues Val-282 and Glu-284.

It belongs to the NAD-dependent glycerol-3-phosphate dehydrogenase family.

Its subcellular location is the cytoplasm. The enzyme catalyses sn-glycerol 3-phosphate + NAD(+) = dihydroxyacetone phosphate + NADH + H(+). It catalyses the reaction sn-glycerol 3-phosphate + NADP(+) = dihydroxyacetone phosphate + NADPH + H(+). Its pathway is membrane lipid metabolism; glycerophospholipid metabolism. Catalyzes the reduction of the glycolytic intermediate dihydroxyacetone phosphate (DHAP) to sn-glycerol 3-phosphate (G3P), the key precursor for phospholipid synthesis. The polypeptide is Glycerol-3-phosphate dehydrogenase [NAD(P)+] (Shewanella frigidimarina (strain NCIMB 400)).